The chain runs to 298 residues: HTH-type transcriptional regulator ArgP (298 aa).

The HTH lysR-type domain maps to 4 to 60 (LDYKWIEALDAVVAQGGFERAAEELYISQSAVSQRIKQLERFLAQPVLIREQPPKPT). The segment at residues 21–40 (FERAAEELYISQSAVSQRIK) is a DNA-binding region (H-T-H motif).

Belongs to the LysR transcriptional regulatory family. In terms of assembly, homodimer.

In terms of biological role, controls the transcription of genes involved in arginine and lysine metabolism. The chain is HTH-type transcriptional regulator ArgP from Vibrio vulnificus (strain CMCP6).